We begin with the raw amino-acid sequence, 556 residues long: Arginine--tRNA ligase (556 aa).

Positions 132 to 142 (ANPTGPIHLGG) match the 'HIGH' region motif.

Belongs to the class-I aminoacyl-tRNA synthetase family. As to quaternary structure, monomer.

The protein localises to the cytoplasm. It catalyses the reaction tRNA(Arg) + L-arginine + ATP = L-arginyl-tRNA(Arg) + AMP + diphosphate. This is Arginine--tRNA ligase from Kocuria rhizophila (strain ATCC 9341 / DSM 348 / NBRC 103217 / DC2201).